We begin with the raw amino-acid sequence, 37 residues long: MKVRASVRRICEKCRVIRRRGRVMVICTNPKHKQRQG.

It belongs to the bacterial ribosomal protein bL36 family.

The sequence is that of Large ribosomal subunit protein bL36 from Thermosynechococcus vestitus (strain NIES-2133 / IAM M-273 / BP-1).